Consider the following 263-residue polypeptide: 3-methyl-2-oxobutanoate hydroxymethyltransferase (263 aa).

Mg(2+) contacts are provided by Asp-43 and Asp-82. 3-methyl-2-oxobutanoate contacts are provided by residues 43-44 (DS), Asp-82, and Lys-111. Residue Glu-113 coordinates Mg(2+). Glu-179 acts as the Proton acceptor in catalysis.

Belongs to the PanB family. As to quaternary structure, homodecamer; pentamer of dimers. The cofactor is Mg(2+).

The protein resides in the cytoplasm. The catalysed reaction is 3-methyl-2-oxobutanoate + (6R)-5,10-methylene-5,6,7,8-tetrahydrofolate + H2O = 2-dehydropantoate + (6S)-5,6,7,8-tetrahydrofolate. It participates in cofactor biosynthesis; (R)-pantothenate biosynthesis; (R)-pantoate from 3-methyl-2-oxobutanoate: step 1/2. Catalyzes the reversible reaction in which hydroxymethyl group from 5,10-methylenetetrahydrofolate is transferred onto alpha-ketoisovalerate to form ketopantoate. This is 3-methyl-2-oxobutanoate hydroxymethyltransferase from Neisseria meningitidis serogroup A / serotype 4A (strain DSM 15465 / Z2491).